Here is a 94-residue protein sequence, read N- to C-terminus: Co-chaperonin GroES (94 aa).

It belongs to the GroES chaperonin family. In terms of assembly, heptamer of 7 subunits arranged in a ring. Interacts with the chaperonin GroEL.

It localises to the cytoplasm. Together with the chaperonin GroEL, plays an essential role in assisting protein folding. The GroEL-GroES system forms a nano-cage that allows encapsulation of the non-native substrate proteins and provides a physical environment optimized to promote and accelerate protein folding. GroES binds to the apical surface of the GroEL ring, thereby capping the opening of the GroEL channel. This is Co-chaperonin GroES from Clostridium novyi (strain NT).